A 377-amino-acid chain; its full sequence is Succinyl-diaminopimelate desuccinylase (377 aa).

Histidine 68 lines the Zn(2+) pocket. Residue aspartate 70 is part of the active site. Aspartate 101 lines the Zn(2+) pocket. Glutamate 135 serves as the catalytic Proton acceptor. Zn(2+)-binding residues include glutamate 136, glutamate 164, and histidine 350.

Belongs to the peptidase M20A family. DapE subfamily. Homodimer. The cofactor is Zn(2+). It depends on Co(2+) as a cofactor.

It catalyses the reaction N-succinyl-(2S,6S)-2,6-diaminopimelate + H2O = (2S,6S)-2,6-diaminopimelate + succinate. The protein operates within amino-acid biosynthesis; L-lysine biosynthesis via DAP pathway; LL-2,6-diaminopimelate from (S)-tetrahydrodipicolinate (succinylase route): step 3/3. Its function is as follows. Catalyzes the hydrolysis of N-succinyl-L,L-diaminopimelic acid (SDAP), forming succinate and LL-2,6-diaminopimelate (DAP), an intermediate involved in the bacterial biosynthesis of lysine and meso-diaminopimelic acid, an essential component of bacterial cell walls. In Aliivibrio salmonicida (strain LFI1238) (Vibrio salmonicida (strain LFI1238)), this protein is Succinyl-diaminopimelate desuccinylase.